Consider the following 161-residue polypeptide: Nucleotide-binding protein PFL_4775 (161 aa).

The protein belongs to the YajQ family.

In terms of biological role, nucleotide-binding protein. This is Nucleotide-binding protein PFL_4775 from Pseudomonas fluorescens (strain ATCC BAA-477 / NRRL B-23932 / Pf-5).